A 395-amino-acid polypeptide reads, in one-letter code: S-adenosylmethionine synthase (395 aa).

An ATP-binding site is contributed by histidine 16. A Mg(2+)-binding site is contributed by aspartate 18. Glutamate 44 is a binding site for K(+). L-methionine is bound by residues glutamate 57 and glutamine 100. The tract at residues 100 to 110 is flexible loop; it reads QSPDIAQGVDR. Residues 167–169, 233–234, aspartate 242, 248–249, alanine 265, and lysine 269 each bind ATP; these read DAK, RF, and RK. An L-methionine-binding site is contributed by aspartate 242. Lysine 273 provides a ligand contact to L-methionine.

Belongs to the AdoMet synthase family. As to quaternary structure, homotetramer; dimer of dimers. Mg(2+) serves as cofactor. It depends on K(+) as a cofactor.

The protein resides in the cytoplasm. The catalysed reaction is L-methionine + ATP + H2O = S-adenosyl-L-methionine + phosphate + diphosphate. Its pathway is amino-acid biosynthesis; S-adenosyl-L-methionine biosynthesis; S-adenosyl-L-methionine from L-methionine: step 1/1. Functionally, catalyzes the formation of S-adenosylmethionine (AdoMet) from methionine and ATP. The overall synthetic reaction is composed of two sequential steps, AdoMet formation and the subsequent tripolyphosphate hydrolysis which occurs prior to release of AdoMet from the enzyme. This Burkholderia lata (strain ATCC 17760 / DSM 23089 / LMG 22485 / NCIMB 9086 / R18194 / 383) protein is S-adenosylmethionine synthase.